A 415-amino-acid polypeptide reads, in one-letter code: Tyrosine-protein phosphatase non-receptor type 2 (415 aa).

Residues 5-275 (IEREFEELDT…RFSYMAIIEG (271 aa)) form the Tyrosine-protein phosphatase domain. Tyr-22 carries the post-translational modification Phosphotyrosine. Ser-52 is modified (phosphoserine). Tyr-68 carries the post-translational modification Phosphotyrosine. Residues Asp-182, 216–222 (CSAGIGR), and Gln-260 each bind substrate. Cys-216 (phosphocysteine intermediate) is an active-site residue. At Cys-216 the chain carries S-nitrosocysteine. Residues Ser-293, Ser-298, and Ser-304 each carry the phosphoserine modification. Residues 346-415 (ESALRKRIRE…WTLFFQQNAL (70 aa)) are endoplasmic reticulum location. A mediates interaction with STX17 region spans residues 376-415 (ERKRKRWLYWQPILTKMGFMSVILVGAFVGWTLFFQQNAL).

This sequence belongs to the protein-tyrosine phosphatase family. Non-receptor class 1 subfamily. As to quaternary structure, interacts with RMDN3. Isoform 1 interacts with TMED9. Isoform 1 interacts with STX17; dephosphorylates STX17. Interacts with ITGA1 (via cytoplasmic domain); activates the phosphatase activity towards EGFR. Interacts with TRAF2; probably involved in tumor necrosis factor-mediated signaling. Interacts with MET. Interacts with FAM220A and STAT3; interaction with FAM220A promotes interaction of PTPN2 with transcriptional activator STAT3, leading to dephosphorylation of STAT3 by PTPN2 and negative regulation of STAT3 transcriptional activator activity. In terms of processing, specifically phosphorylated in a cell cycle-dependent manner by cyclin-dependent kinases CDK1 and CDK2. Probably activated through phosphorylation by PKR. Ubiquitously expressed. Isoform 2 is probably the major isoform. Isoform 1 is expressed in T-cells and in placenta.

Its subcellular location is the endoplasmic reticulum. It localises to the endoplasmic reticulum-Golgi intermediate compartment. It is found in the nucleus. The protein resides in the cytoplasm. The protein localises to the cell membrane. The catalysed reaction is O-phospho-L-tyrosyl-[protein] + H2O = L-tyrosyl-[protein] + phosphate. Its function is as follows. Non-receptor type tyrosine-specific phosphatase that dephosphorylates receptor protein tyrosine kinases including INSR, EGFR, CSF1R, PDGFR. Also dephosphorylates non-receptor protein tyrosine kinases like JAK1, JAK2, JAK3, Src family kinases, STAT1, STAT3 and STAT6 either in the nucleus or the cytoplasm. Negatively regulates numerous signaling pathways and biological processes like hematopoiesis, inflammatory response, cell proliferation and differentiation, and glucose homeostasis. Plays a multifaceted and important role in the development of the immune system. Functions in T-cell receptor signaling through dephosphorylation of FYN and LCK to control T-cells differentiation and activation. Dephosphorylates CSF1R, negatively regulating its downstream signaling and macrophage differentiation. Negatively regulates cytokine (IL2/interleukin-2 and interferon)-mediated signaling through dephosphorylation of the cytoplasmic kinases JAK1, JAK3 and their substrate STAT1, that propagate signaling downstream of the cytokine receptors. Also regulates the IL6/interleukin-6 and IL4/interleukin-4 cytokine signaling through dephosphorylation of STAT3 and STAT6 respectively. In addition to the immune system, it is involved in anchorage-dependent, negative regulation of EGF-stimulated cell growth. Activated by the integrin ITGA1/ITGB1, it dephosphorylates EGFR and negatively regulates EGF signaling. Dephosphorylates PDGFRB and negatively regulates platelet-derived growth factor receptor-beta signaling pathway and therefore cell proliferation. Negatively regulates tumor necrosis factor-mediated signaling downstream via MAPK through SRC dephosphorylation. May also regulate the hepatocyte growth factor receptor signaling pathway through dephosphorylation of the hepatocyte growth factor receptor MET. Also plays an important role in glucose homeostasis. For instance, negatively regulates the insulin receptor signaling pathway through the dephosphorylation of INSR and control gluconeogenesis and liver glucose production through negative regulation of the IL6 signaling pathways. May also bind DNA. The polypeptide is Tyrosine-protein phosphatase non-receptor type 2 (PTPN2) (Homo sapiens (Human)).